The sequence spans 266 residues: 15-hydroxyprostaglandin dehydrogenase [NAD(+)] (266 aa).

NAD(+) contacts are provided by residues 12-20 (GAAQGIGRA), 36-37 (DW), 63-65 (CDV), and Asn91. Residues Ser138 and Gln148 each contribute to the substrate site. Catalysis depends on Tyr151, which acts as the Proton acceptor. Residues 151–155 (YCASK) and 186–188 (VNT) contribute to the NAD(+) site.

The protein belongs to the short-chain dehydrogenases/reductases (SDR) family. In terms of assembly, homodimer. In terms of tissue distribution, detected in colon epithelium (at protein level).

It is found in the cytoplasm. It carries out the reaction prostaglandin E2 + NAD(+) = 15-oxoprostaglandin E2 + NADH + H(+). It catalyses the reaction (15S)-hydroxy-(5Z,8Z,11Z,13E)-eicosatetraenoate + NAD(+) = 15-oxo-(5Z,8Z,11Z,13E)-eicosatetraenoate + NADH + H(+). The catalysed reaction is (11R)-hydroxy-(5Z,8Z,12E,14Z)-eicosatetraenoate + NAD(+) = 11-oxo-(5Z,8Z,12E,14Z)-eicosatetraenoate + NADH + H(+). The enzyme catalyses lipoxin A4 + NAD(+) = 15-oxo-(5S,6R)-dihydroxy-(7E,9E,11Z,13E)-eicosatetraenoate + NADH + H(+). It carries out the reaction 15-oxo-(5S,6R)-dihydroxy-(7E,9E,11Z)-eicosatrienoate + NADH + H(+) = (5S,6R,15S)-trihydroxy-(7E,9E,11Z)-eicosatrienoate + NAD(+). It catalyses the reaction prostaglandin A1 + NAD(+) = 15-oxo-prostaglandin A1 + NADH + H(+). The catalysed reaction is prostaglandin E1 + NAD(+) = 15-oxoprostaglandin E1 + NADH + H(+). The enzyme catalyses 14-hydroxy-(4Z,7Z,10Z,12E,16Z,19Z)-docosahexaenoate + NAD(+) = 14-oxo-(4Z,7Z,10Z,12E,16Z,19Z)-docosahexaenoate + NADH + H(+). It carries out the reaction resolvin E1 + NAD(+) = 18-oxo-resolvin E1 + NADH + H(+). It catalyses the reaction resolvin D1 + NAD(+) = 8-oxoresolvin D1 + NADH + H(+). The catalysed reaction is resolvin D1 + NAD(+) = 17-oxoresolvin D1 + NADH + H(+). The enzyme catalyses resolvin D2 + NAD(+) = 7-oxoresolvin D2 + NADH + H(+). It carries out the reaction resolvin D2 + NAD(+) = 16-oxoresolvin D2 + NADH + H(+). Catalyzes the NAD-dependent dehydrogenation (oxidation) of a broad array of hydroxylated polyunsaturated fatty acids (mainly eicosanoids and docosanoids, including prostaglandins, lipoxins and resolvins), yielding their corresponding keto (oxo) metabolites. Decreases the levels of the pro-proliferative prostaglandins such as prostaglandin E2 (whose activity is increased in cancer because of an increase in the expression of cyclooxygenase 2) and generates oxo-fatty acid products that can profoundly influence cell function by abrogating pro-inflammatory cytokine expression. Converts resolvins E1, D1 and D2 to their oxo products, which represents a mode of resolvin inactivation. Resolvin E1 plays important roles during the resolution phase of acute inflammation, while resolvins D1 and D2 have a unique role in obesity-induced adipose inflammation. In Homo sapiens (Human), this protein is 15-hydroxyprostaglandin dehydrogenase [NAD(+)].